Reading from the N-terminus, the 1090-residue chain is Pullulanase (1090 aa).

Residues 1-19 form the signal peptide; the sequence is MLRYTRNALVLGSLVLLSG. Cys-20 carries the N-palmitoyl cysteine lipid modification. Cys-20 is lipidated: S-diacylglycerol cysteine. Asp-684 acts as the Nucleophile in catalysis. Glu-713 (proton donor) is an active-site residue.

Belongs to the glycosyl hydrolase 13 family. As to quaternary structure, homotrimer.

The protein localises to the cell membrane. It catalyses the reaction Hydrolysis of (1-&gt;6)-alpha-D-glucosidic linkages in pullulan, amylopectin and glycogen, and in the alpha- and beta-limit dextrins of amylopectin and glycogen.. This Klebsiella pneumoniae protein is Pullulanase (pulA).